Here is a 367-residue protein sequence, read N- to C-terminus: 5-amino-6-(D-ribitylamino)uracil--L-tyrosine 4-hydroxyphenyl transferase (367 aa).

Residues 54–288 (ITYIENWNIN…VYAISRLMFR (235 aa)) enclose the Radical SAM core domain. Residues Cys68, Cys72, and Cys75 each coordinate [4Fe-4S] cluster.

This sequence belongs to the radical SAM superfamily. CofH family. In terms of assembly, consists of two subunits, CofG and CofH. The cofactor is [4Fe-4S] cluster.

The catalysed reaction is 5-amino-6-(D-ribitylamino)uracil + L-tyrosine + S-adenosyl-L-methionine = 5-amino-5-(4-hydroxybenzyl)-6-(D-ribitylimino)-5,6-dihydrouracil + 2-iminoacetate + 5'-deoxyadenosine + L-methionine + H(+). It functions in the pathway cofactor biosynthesis; coenzyme F0 biosynthesis. Functionally, catalyzes the radical-mediated synthesis of 5-amino-5-(4-hydroxybenzyl)-6-(D-ribitylimino)-5,6-dihydrouracil from 5-amino-6-(D-ribitylamino)uracil and L-tyrosine. The polypeptide is 5-amino-6-(D-ribitylamino)uracil--L-tyrosine 4-hydroxyphenyl transferase (Methanothermobacter thermautotrophicus (strain ATCC 29096 / DSM 1053 / JCM 10044 / NBRC 100330 / Delta H) (Methanobacterium thermoautotrophicum)).